Here is a 227-residue protein sequence, read N- to C-terminus: Cytidylate kinase (227 aa).

G12–T20 contacts ATP.

This sequence belongs to the cytidylate kinase family. Type 1 subfamily.

The protein localises to the cytoplasm. It carries out the reaction CMP + ATP = CDP + ADP. It catalyses the reaction dCMP + ATP = dCDP + ADP. The chain is Cytidylate kinase from Citrobacter koseri (strain ATCC BAA-895 / CDC 4225-83 / SGSC4696).